Reading from the N-terminus, the 287-residue chain is Methylamine utilization ferredoxin-type protein MauN (287 aa).

2 consecutive 4Fe-4S ferredoxin-type domains span residues 218–248 and 251–280; these read RVAAARREGCTNCGACFQICTEPHVITPALK and GSTLILSGDCVNCGSCIDACPVNVFEMTMR. Cys227, Cys230, Cys233, Cys237, Cys260, Cys263, Cys266, and Cys270 together coordinate [4Fe-4S] cluster.

It participates in one-carbon metabolism; methylamine degradation. In terms of biological role, involved in electron transfer. The polypeptide is Methylamine utilization ferredoxin-type protein MauN (mauN) (Methylorubrum extorquens (strain ATCC 14718 / DSM 1338 / JCM 2805 / NCIMB 9133 / AM1) (Methylobacterium extorquens)).